The chain runs to 1075 residues: DNA-directed RNA polymerase subunit beta (1075 aa).

It belongs to the RNA polymerase beta chain family. In plastids the minimal PEP RNA polymerase catalytic core is composed of four subunits: alpha, beta, beta', and beta''. When a (nuclear-encoded) sigma factor is associated with the core the holoenzyme is formed, which can initiate transcription.

The protein localises to the plastid. Its subcellular location is the chloroplast. It carries out the reaction RNA(n) + a ribonucleoside 5'-triphosphate = RNA(n+1) + diphosphate. DNA-dependent RNA polymerase catalyzes the transcription of DNA into RNA using the four ribonucleoside triphosphates as substrates. In Pinus thunbergii (Japanese black pine), this protein is DNA-directed RNA polymerase subunit beta.